Reading from the N-terminus, the 441-residue chain is G-protein coupled receptor family C group 5 member C (441 aa).

The first 22 residues, 1–22 (MATHKTLLMCLGLPLFFPGALA), serve as a signal peptide directing secretion. Topologically, residues 23–49 (QNHAPPGCSPDLDPLYYNLCDRSGAWG) are extracellular. Residues 50 to 70 (IVLEAVAGAGIITTFVLTIIL) traverse the membrane as a helical segment. Residues 71–84 (VASLPFVQDTKKRS) are Cytoplasmic-facing. Residues 85–105 (LLGTQVFFLLGTLGLFCLVFA) traverse the membrane as a helical segment. The Extracellular segment spans residues 106–119 (CVVKPDFSTCASRR). Residues 120–140 (FLFGVLFAICFSCLIAHTLSL) traverse the membrane as a helical segment. The Cytoplasmic segment spans residues 141-154 (NFLARKNHGPRGWV). The chain crosses the membrane as a helical span at residues 155 to 175 (IFTVALLLTLVEVIINTEWLI). The Extracellular segment spans residues 176–207 (ITLVRGGGQVSTPGNGSADWTVTSPCAIANMD). Asn190 is a glycosylation site (N-linked (GlcNAc...) asparagine). The helical transmembrane segment at 208–228 (FVMALIYVMLLLLAAFLGAWP) threads the bilayer. Residues 229 to 240 (TLCGRFKRWRKH) lie on the Cytoplasmic side of the membrane. The helical transmembrane segment at 241–261 (GVFVLLTTATSIAIWVVWIVM) threads the bilayer. At 262–278 (YTYGNKQHHSPTWDDPT) the chain is on the extracellular side. Residues 279-299 (LAIALAANAWTFVFFYVIPEV) traverse the membrane as a helical segment. Over 300–441 (SQVTKPSPEQ…DQSPKNKTRW (142 aa)) the chain is Cytoplasmic. 4 positions are modified to phosphoserine: Ser343, Ser382, Ser402, and Ser405. The residue at position 413 (Tyr413) is a Phosphotyrosine. The disordered stretch occupies residues 419–441 (QVATPTKDGKISQDQSPKNKTRW). Position 422 is a phosphothreonine (Thr422). Residues 430–441 (SQDQSPKNKTRW) are compositionally biased toward polar residues. Position 434 is a phosphoserine (Ser434).

The protein belongs to the G-protein coupled receptor 3 family.

The protein localises to the cell membrane. In terms of biological role, this retinoic acid-inducible G-protein coupled receptor provide evidence for a possible interaction between retinoid and G-protein signaling pathways. This Rattus norvegicus (Rat) protein is G-protein coupled receptor family C group 5 member C (Gprc5c).